Reading from the N-terminus, the 254-residue chain is 3-dehydroquinate dehydratase (254 aa).

Residues 47-49 and arginine 83 contribute to the 3-dehydroquinate site; that span reads EFR. The Proton donor/acceptor role is filled by histidine 144. The active-site Schiff-base intermediate with substrate is the lysine 171. Residues arginine 213, serine 232, and glutamine 236 each contribute to the 3-dehydroquinate site.

Belongs to the type-I 3-dehydroquinase family. In terms of assembly, homodimer.

It catalyses the reaction 3-dehydroquinate = 3-dehydroshikimate + H2O. The protein operates within metabolic intermediate biosynthesis; chorismate biosynthesis; chorismate from D-erythrose 4-phosphate and phosphoenolpyruvate: step 3/7. Functionally, involved in the third step of the chorismate pathway, which leads to the biosynthesis of aromatic amino acids. Catalyzes the cis-dehydration of 3-dehydroquinate (DHQ) and introduces the first double bond of the aromatic ring to yield 3-dehydroshikimate. This is 3-dehydroquinate dehydratase from Neisseria meningitidis serogroup A / serotype 4A (strain DSM 15465 / Z2491).